Consider the following 851-residue polypeptide: DNA mismatch repair protein MutS (851 aa).

ATP is bound at residue 614–621; that stretch reads GPNMGGKS.

This sequence belongs to the DNA mismatch repair MutS family.

Its function is as follows. This protein is involved in the repair of mismatches in DNA. It is possible that it carries out the mismatch recognition step. This protein has a weak ATPase activity. This Yersinia pestis protein is DNA mismatch repair protein MutS.